The chain runs to 324 residues: Probable UDP-sugar transporter protein SLC35A4 (324 aa).

Topologically, residues 1–18 are cytoplasmic; the sequence is MSVEDGGMPGLSRPRQAR. A helical membrane pass occupies residues 19 to 39; that stretch reads WTLMLLLSTAMYGAHAPLLAL. Topologically, residues 40-52 are lumenal; it reads CHVDGRVPFRPSS. The helical transmembrane segment at 53-73 threads the bilayer; it reads AVLLTELTKLLLCAFSLLVGW. Residues 74–85 are Cytoplasmic-facing; the sequence is QAWPQGAPPWRQ. The chain crosses the membrane as a helical span at residues 86–106; sequence AAPFALSALLYGANNNLVIYL. Over 107-142 the chain is Lumenal; it reads QRYMDPSTYQVLSNLKIGSTAVLYCLCLRHRLSVRQ. The chain crosses the membrane as a helical span at residues 143 to 163; the sequence is GLALLLLMAAGACYAAGGLQV. Residues 164-180 are Cytoplasmic-facing; the sequence is PGNTLPRPPPAAAASPM. Residues 181–201 form a helical membrane-spanning segment; it reads PLHITPLGLLLLILYCLISGL. The Lumenal portion of the chain corresponds to 202-214; it reads SSVYTELLMKRQQ. A helical membrane pass occupies residues 215–235; sequence LPLALQNLFLYTFGVLLNLGL. The Cytoplasmic segment spans residues 236 to 250; sequence HAGGGPGPGLLEGFS. A helical membrane pass occupies residues 251–271; sequence GWAALVVLSQALNGLLMSVVM. The Lumenal segment spans residues 272–275; sequence KHGS. Residues 276 to 298 traverse the membrane as a helical segment; that stretch reads SITRLFVVSCSLVVNAVLSAVLL. Residues 299–324 are Cytoplasmic-facing; it reads RLQLTAAFFLATLLIGLAMRLYYGSR.

The protein belongs to the nucleotide-sugar transporter family. SLC35A subfamily. As to quaternary structure, found in a complex with SLC35A2 and SLC35A3.

Its subcellular location is the golgi apparatus membrane. The catalysed reaction is CDP-L-ribitol(in) + CDP(out) = CDP-L-ribitol(out) + CDP(in). Functionally, mediates the transport of CDP-ribitol. Does not exhibit CMP-sialic acid, UDP-galactose and UDP-N-acetylglucosamine transport activity. The protein is Probable UDP-sugar transporter protein SLC35A4 of Pongo abelii (Sumatran orangutan).